The sequence spans 780 residues: Ribosome biogenesis protein BOP1 homolog (780 aa).

Basic residues predominate over residues 1 to 11; it reads MTKKQAIKRKV. Residues 1 to 155 form a disordered region; it reads MTKKQAIKRK…DSDTSDEEDI (155 aa). Residues 17 to 26 are compositionally biased toward polar residues; it reads TNEQSSASEP. Acidic residues-rich tracts occupy residues 44-53, 60-72, 83-113, and 145-154; these read EDTTDDEGID, SSEDLEFESDEEG, AEGDAEEDEDDDEEEDEDSDEASEDNDDAEE, and EDSDTSDEED. 7 WD repeats span residues 441-482, 484-522, 566-608, 611-649, 652-691, 695-734, and 750-780; these read GHTD…RTIE, NDVVRCVAWCPNAKLSIIAVATGSRLLLINPKVGDKLLI, THFK…SQIP, KSKGLIQCVLFHPVKPCFFVATQHNIRIYDLVKQELIKK, TNSKWISGMSIHPKGDNLLVSTYDKKMLWFDLDLSTKPYQ, LHRNAVRSVAFHLRYPLFASGSDDQAVIVSHGMVYNDLLQ, and RDEFGVLDVSWHPVQPWVFSTGADCTIRLYT.

This sequence belongs to the WD repeat BOP1/ERB1 family.

The protein resides in the nucleus. Its subcellular location is the nucleolus. It localises to the nucleoplasm. Its function is as follows. Required for maturation of ribosomal RNAs and formation of the large ribosomal subunit. The sequence is that of Ribosome biogenesis protein BOP1 homolog from Drosophila virilis (Fruit fly).